Consider the following 437-residue polypeptide: MELNGPPVSQLPQTATSTASLPVTVAGTLLRGPQLLLRAAEKYPRTPKCARCRNHGVVSALKGHKRYCRWKDCMCAKCTLIAERQRVMAAQVALRRQQAQEENEARELQLLYGTAEGLALAAANGIIPPRPAYEVFGSVCTEGGTDSKIQKFDLFPKSLIPRSVTPQLSSGGKPVSPDSESVSGSAPGASSPEARPGSGSENGDGESLLSSPISKALKEGEESPSSISPLGSESGSDAEKDEQDPSSSSSARQRTPIDILTRVFPAQKRSVLELVLQGCGGDVVQAIEQILNNRGQDKSEETWSRDGALPSIQPSVSSTHRPLIAGALTPAIGTLGSRSAFSPLQPNGAHFGTEANAYQLGGHLGLNPLRLAYSAHSRGLAFMAPYSTAGFMPTLGFRPPMDYAFSDLMRDRANVHKDQVYTNGLYGPVVNNNAEKQ.

The segment at residues 49 to 96 (CARCRNHGVVSALKGHKRYCRWKDCMCAKCTLIAERQRVMAAQVALRR) is a DNA-binding region (DM). Disordered stretches follow at residues 163-254 (SVTP…ARQR) and 297-317 (DKSE…PSVS). Low complexity-rich tracts occupy residues 179–201 (SESV…SGSE) and 223–235 (SPSS…SESG). A DMA domain is found at 254-289 (RTPIDILTRVFPAQKRSVLELVLQGCGGDVVQAIEQ).

This sequence belongs to the DMRT family.

It localises to the nucleus. May be involved in sexual development. This chain is Doublesex- and mab-3-related transcription factor A2 (dmrta2), found in Xenopus tropicalis (Western clawed frog).